Consider the following 39-residue polypeptide: MDWRVIVVVSPLLIAATWAAINIGAAAIRQLQDVLGREA.

The helical transmembrane segment at 4-24 threads the bilayer; it reads RVIVVVSPLLIAATWAAINIG.

This sequence belongs to the PsbY family. As to quaternary structure, PSII is composed of 1 copy each of membrane proteins PsbA, PsbB, PsbC, PsbD, PsbE, PsbF, PsbH, PsbI, PsbJ, PsbK, PsbL, PsbM, PsbT, PsbX, PsbY, PsbZ, Psb30/Ycf12, peripheral proteins PsbO, CyanoQ (PsbQ), PsbU, PsbV and a large number of cofactors. It forms dimeric complexes.

It is found in the cellular thylakoid membrane. Functionally, loosely associated component of the core of photosystem II (PSII), it is not always seen in crystals. PSII is a light-driven water plastoquinone oxidoreductase, using light energy to abstract electrons from H(2)O, generating a proton gradient subsequently used for ATP formation. This chain is Photosystem II reaction center protein Y, found in Synechocystis sp. (strain ATCC 27184 / PCC 6803 / Kazusa).